A 359-amino-acid polypeptide reads, in one-letter code: Aromatic amino acid aminotransferase (359 aa).

The segment at 1–42 (MSERKPPYLRSALDSIPPYRPGRKVVGPDGRSAKLSSNESPF) is disordered. Lys-223 carries the post-translational modification N6-(pyridoxal phosphate)lysine.

It belongs to the class-II pyridoxal-phosphate-dependent aminotransferase family. Homodimer. Requires pyridoxal 5'-phosphate as cofactor.

The enzyme catalyses an aromatic L-alpha-amino acid + 2-oxoglutarate = an aromatic oxo-acid + L-glutamate. In terms of biological role, aminotransferase that catalyzes the conversion of aromatic amino acids and 2-oxoglutarate into corresponding aromatic oxo acids and L-glutamate. This chain is Aromatic amino acid aminotransferase, found in Thermobifida fusca (strain YX).